We begin with the raw amino-acid sequence, 311 residues long: MFHHISVMLNETIDYLNVKENGVYIDCTLGGAGHALYLLNQLNDDGRLIAIDQDQTAIDNAKEVLKDHLHRVTFVHSNFRELTQILKDLNIEKVDGIYYDLGVSSPQLDIPERGFSYHHDATLDMRMDQTQELTAYEIVNNWSYEALVKIFYRYGEEKFSKQIARRIEAHREQQPITTTLELVDIIKEGIPAKARRKGGHPAKRVFQALRIAVNDELSAFEDSIEQAIELVKVDGRISVITFHSLEDRLCKQVFQEYEKGPEVPRGLPVIPEAYTPKLKRVNRKPITATEEDLDDNNRARSAKLRVAEILK.

Residues 32–34, aspartate 52, phenylalanine 79, aspartate 100, and glutamine 107 contribute to the S-adenosyl-L-methionine site; that span reads AGH.

Belongs to the methyltransferase superfamily. RsmH family.

Its subcellular location is the cytoplasm. The enzyme catalyses cytidine(1402) in 16S rRNA + S-adenosyl-L-methionine = N(4)-methylcytidine(1402) in 16S rRNA + S-adenosyl-L-homocysteine + H(+). Functionally, specifically methylates the N4 position of cytidine in position 1402 (C1402) of 16S rRNA. The chain is Ribosomal RNA small subunit methyltransferase H from Staphylococcus aureus (strain COL).